A 245-amino-acid polypeptide reads, in one-letter code: 5'-nucleotidase SurE (245 aa).

4 residues coordinate a divalent metal cation: D8, D9, S39, and N91.

Belongs to the SurE nucleotidase family. Requires a divalent metal cation as cofactor.

It is found in the cytoplasm. It catalyses the reaction a ribonucleoside 5'-phosphate + H2O = a ribonucleoside + phosphate. Functionally, nucleotidase that shows phosphatase activity on nucleoside 5'-monophosphates. The polypeptide is 5'-nucleotidase SurE (Janthinobacterium sp. (strain Marseille) (Minibacterium massiliensis)).